We begin with the raw amino-acid sequence, 440 residues long: Serine protease inhibitor A3G (440 aa).

The segment at 357-382 (GTEAAAATGMAGVGCCAVFDFLEIFF) is RCL.

This sequence belongs to the serpin family. In terms of tissue distribution, expressed in bone marrow (particularly hematopoietic stem cells), heart, kidney, liver, lung, skeletal muscle, spleen, testis, thymus and T-cells.

It localises to the cytoplasm. It is found in the nucleus. In terms of biological role, serine and cysteine protease inhibitor. Can inhibit lysosomal papain-like proteases including the cathepsins B, G, H, K, L and V. Ineffective against elastase, granzyme A, granzyme B, or caspases 3, 8 or 9. Inhibition of cytoplasmic cathepsin B following release from the lysosome may protect cells from apoptosis. This may facilitate the survival of progenitor T-cells and the subsequent development of long term memory CD8 T-cells. The polypeptide is Serine protease inhibitor A3G (Serpina3g) (Mus musculus (Mouse)).